Consider the following 67-residue polypeptide: DNA-directed RNA polymerase subunit omega (67 aa).

Belongs to the RNA polymerase subunit omega family. In terms of assembly, RNAP is composed of a core of 2 alpha, a beta and a beta' subunit. The core is associated with a delta subunit, and at least one of epsilon or omega. When a sigma factor is associated with the core the holoenzyme is formed, which can initiate transcription.

The catalysed reaction is RNA(n) + a ribonucleoside 5'-triphosphate = RNA(n+1) + diphosphate. Promotes RNA polymerase assembly. Latches the N- and C-terminal regions of the beta' subunit thereby facilitating its interaction with the beta and alpha subunits. In vitro reconstitution experiments this subunit is dispensible. This Bacillus subtilis (strain 168) protein is DNA-directed RNA polymerase subunit omega (rpoZ).